Here is a 283-residue protein sequence, read N- to C-terminus: Polyamine aminopropyltransferase (283 aa).

Positions 5-238 (TTWIDEYHKG…GIWSWTFASS (234 aa)) constitute a PABS domain. Residue Q32 participates in S-methyl-5'-thioadenosine binding. Residues H63 and D87 each coordinate spermidine. S-methyl-5'-thioadenosine contacts are provided by residues E107 and 139 to 140 (DG). D158 acts as the Proton acceptor in catalysis. Residue 158–161 (DSSD) participates in spermidine binding.

This sequence belongs to the spermidine/spermine synthase family. As to quaternary structure, homodimer or homotetramer.

It is found in the cytoplasm. It catalyses the reaction S-adenosyl 3-(methylsulfanyl)propylamine + putrescine = S-methyl-5'-thioadenosine + spermidine + H(+). The protein operates within amine and polyamine biosynthesis; spermidine biosynthesis; spermidine from putrescine: step 1/1. Functionally, catalyzes the irreversible transfer of a propylamine group from the amino donor S-adenosylmethioninamine (decarboxy-AdoMet) to putrescine (1,4-diaminobutane) to yield spermidine. The chain is Polyamine aminopropyltransferase from Prochlorococcus marinus (strain MIT 9215).